A 289-amino-acid polypeptide reads, in one-letter code: Enoyl-CoA delta isomerase 1, mitochondrial (289 aa).

The N-terminal 28 residues, 1-28, are a transit peptide targeting the mitochondrion; that stretch reads MALAAARRVLLQAGSRLGRRGAVDGARR. Lys48 carries the N6-acetyllysine; alternate modification. Lys48 bears the N6-succinyllysine; alternate mark. Lys71 carries the N6-succinyllysine modification. Position 76 is an N6-acetyllysine (Lys76). Substrate is bound by residues 93–97, Gly140, and Asn164; that span reads AGLDL. N6-acetyllysine; alternate is present on residues Lys222, Lys229, and Lys255. N6-succinyllysine; alternate occurs at positions 222, 229, and 255. N6-succinyllysine is present on Lys275. An N6-acetyllysine; alternate modification is found at Lys283. Lys283 is modified (N6-succinyllysine; alternate).

This sequence belongs to the enoyl-CoA hydratase/isomerase family. Homotrimer.

It is found in the mitochondrion matrix. It catalyses the reaction a (3Z)-enoyl-CoA = a 4-saturated (2E)-enoyl-CoA. It carries out the reaction a (3E)-enoyl-CoA = a 4-saturated (2E)-enoyl-CoA. The enzyme catalyses (3Z)-octenoyl-CoA = (2E)-octenoyl-CoA. The catalysed reaction is (2E)-tetradecenoyl-CoA = (3Z)-tetradecenoyl-CoA. It catalyses the reaction (3Z)-dodecenoyl-CoA = (2E)-dodecenoyl-CoA. It carries out the reaction (3Z)-hexenoyl-CoA = (2E)-hexenoyl-CoA. The enzyme catalyses (3Z)-decenoyl-CoA = (2E)-decenoyl-CoA. The protein operates within lipid metabolism; fatty acid beta-oxidation. Functionally, key enzyme of fatty acid beta-oxidation. Able to isomerize both 3-cis (3Z) and 3-trans (3E) double bonds into the 2-trans (2E) form in a range of enoyl-CoA species, with a preference for (3Z)-enoyl-CoAs over (3E)-enoyl-CoAs. The catalytic efficiency of this enzyme is not affected by the fatty acyl chain length. The polypeptide is Enoyl-CoA delta isomerase 1, mitochondrial (Rattus norvegicus (Rat)).